Consider the following 224-residue polypeptide: uncharacterized protein (224 aa).

N-linked (GlcNAc...) asparagine glycans are attached at residues Asn-10, Asn-70, and Asn-74.

It localises to the endoplasmic reticulum. This is an uncharacterized protein from Saccharomyces cerevisiae (strain ATCC 204508 / S288c) (Baker's yeast).